A 251-amino-acid chain; its full sequence is Blue-light absorbing proteorhodopsin (251 aa).

The signal sequence occupies residues 1 to 18; sequence MGKLLLILGSAIALPSFA. The next 7 membrane-spanning stretches (helical) occupy residues 30–50, 65–85, 97–117, 120–140, 144–164, 190–210, and 223–243; these read VGVS…FFFV, VSGL…GVWI, IDWL…LAAC, VAAS…GAGF, AGLA…LYMI, MMMI…AGYL, and LIYN…IWNV. Lys233 is modified (N6-(retinylidene)lysine).

Belongs to the archaeal/bacterial/fungal opsin family. Post-translationally, contains one covalently linked retinal chromophore.

The protein localises to the cell membrane. Its function is as follows. Light-driven proton pump. May have a regulatory rather than energy harvesting function, based on light-induced opening of proton channels, to modulate cell physiology depending on light intensity variations. Could be, therefore, a sensory rhodopsin, potentially associated with a transducer component. The sequence is that of Blue-light absorbing proteorhodopsin from Gamma-proteobacterium Hot 75m4.